The chain runs to 216 residues: Adenylate kinase (216 aa).

ATP is bound at residue 10–15 (GAGKGT). Residues 30–59 (STGDMFRAAIKEGTPLGLQAKEYMDRGDLV) form an NMP region. AMP-binding positions include Thr-31, Arg-36, 57–59 (DLV), 85–88 (GFPR), and Gln-92. Residues 126–163 (GRRICKNCGATYHLVFNPPAKSGVCDKCGGELYQRADD) are LID. Arg-127 contacts ATP. Residues Cys-130 and Cys-133 each coordinate Zn(2+). 136 to 137 (TY) provides a ligand contact to ATP. The Zn(2+) site is built by Cys-150 and Cys-153. The AMP site is built by Arg-160 and Arg-171. Residue Gln-199 coordinates ATP.

It belongs to the adenylate kinase family. In terms of assembly, monomer.

The protein localises to the cytoplasm. It carries out the reaction AMP + ATP = 2 ADP. The protein operates within purine metabolism; AMP biosynthesis via salvage pathway; AMP from ADP: step 1/1. In terms of biological role, catalyzes the reversible transfer of the terminal phosphate group between ATP and AMP. Plays an important role in cellular energy homeostasis and in adenine nucleotide metabolism. The chain is Adenylate kinase from Geobacillus sp. (strain WCH70).